A 453-amino-acid polypeptide reads, in one-letter code: tRNA modification GTPase MnmE (453 aa).

R22, E79, and K119 together coordinate (6S)-5-formyl-5,6,7,8-tetrahydrofolate. The TrmE-type G domain occupies 215 to 376 (GMKVVIAGRP…LKAHLKSLMG (162 aa)). Position 225 (N225) interacts with K(+). GTP contacts are provided by residues 225 to 230 (NAGKSS), 244 to 250 (TEIAGTT), 269 to 272 (DTAG), and 334 to 337 (NKAD). S229 contributes to the Mg(2+) binding site. The K(+) site is built by T244, I246, and T249. Residue T250 participates in Mg(2+) binding. K453 is a (6S)-5-formyl-5,6,7,8-tetrahydrofolate binding site.

This sequence belongs to the TRAFAC class TrmE-Era-EngA-EngB-Septin-like GTPase superfamily. TrmE GTPase family. Homodimer. Heterotetramer of two MnmE and two MnmG subunits. K(+) serves as cofactor.

It is found in the cytoplasm. Exhibits a very high intrinsic GTPase hydrolysis rate. Involved in the addition of a carboxymethylaminomethyl (cmnm) group at the wobble position (U34) of certain tRNAs, forming tRNA-cmnm(5)s(2)U34. The chain is tRNA modification GTPase MnmE from Shewanella loihica (strain ATCC BAA-1088 / PV-4).